Here is a 125-residue protein sequence, read N- to C-terminus: Large ribosomal subunit protein uL22 (125 aa).

The protein belongs to the universal ribosomal protein uL22 family. As to quaternary structure, part of the 50S ribosomal subunit.

This protein binds specifically to 23S rRNA; its binding is stimulated by other ribosomal proteins, e.g. L4, L17, and L20. It is important during the early stages of 50S assembly. It makes multiple contacts with different domains of the 23S rRNA in the assembled 50S subunit and ribosome. Functionally, the globular domain of the protein is located near the polypeptide exit tunnel on the outside of the subunit, while an extended beta-hairpin is found that lines the wall of the exit tunnel in the center of the 70S ribosome. The polypeptide is Large ribosomal subunit protein uL22 (Novosphingobium aromaticivorans (strain ATCC 700278 / DSM 12444 / CCUG 56034 / CIP 105152 / NBRC 16084 / F199)).